The sequence spans 1673 residues: Protein TIC 214 (1673 aa).

A run of 6 helical transmembrane segments spans residues 32-52 (AGLY…ILLI), 70-90 (LILG…YIAF), 93-113 (PYTL…GNNL), 130-150 (LEIL…TCIF), 170-190 (MVFL…VLMC), and 218-238 (FFLV…IQSL). 2 stretches are compositionally biased toward basic and acidic residues: residues 264-276 (LKKS…GKST) and 283-298 (SHEK…SKLE). Disordered stretches follow at residues 264–302 (LKKS…NEDE), 547–611 (VVFD…YSIR), 1120–1146 (NKQS…TDNL), and 1370–1433 (QQNQ…SEDD). Residues 562 to 586 (DNGNIQNNSSDKTINPQNNLTNLKP) are compositionally biased toward polar residues. The segment covering 597–611 (TTEKEPKDDKSYSIR) has biased composition (basic and acidic residues). The segment covering 1120 to 1135 (NKQSLQKRNSSGNSNL) has biased composition (polar residues). Residues 1370-1379 (QQNQTTTKMN) show a composition bias toward low complexity. Composition is skewed to basic and acidic residues over residues 1380-1399 (TETK…KKTE) and 1406-1423 (TKNK…KETE).

The protein belongs to the TIC214 family. As to quaternary structure, part of the Tic complex.

It localises to the plastid. It is found in the chloroplast inner membrane. Functionally, involved in protein precursor import into chloroplasts. May be part of an intermediate translocation complex acting as a protein-conducting channel at the inner envelope. This Cuscuta gronovii (Common dodder) protein is Protein TIC 214.